Consider the following 279-residue polypeptide: Large ribosomal subunit protein uL2 (279 aa).

Residues 202-279 form a disordered region; that stretch reads NASIGKAGRS…TSRHKSKKKG (78 aa). Residues 209–220 show a composition bias toward basic residues; the sequence is GRSRWLGRRPHN.

The protein belongs to the universal ribosomal protein uL2 family. As to quaternary structure, part of the 50S ribosomal subunit. Forms a bridge to the 30S subunit in the 70S ribosome.

One of the primary rRNA binding proteins. Required for association of the 30S and 50S subunits to form the 70S ribosome, for tRNA binding and peptide bond formation. It has been suggested to have peptidyltransferase activity; this is somewhat controversial. Makes several contacts with the 16S rRNA in the 70S ribosome. This chain is Large ribosomal subunit protein uL2, found in Methylocella silvestris (strain DSM 15510 / CIP 108128 / LMG 27833 / NCIMB 13906 / BL2).